Here is a 661-residue protein sequence, read N- to C-terminus: MGTLFRRNVQNQKSDSDENNKGGSVHNKRESRNHIHHQQGLGHKRRRGISGSAKRNERGKDFDRKRDGNGRKRWRDSRRLIFILGAFLGVLLPFSFGAYHVHNSDSDLFDNFVNFDSLKVYLDDWKDVLPQGISSFIDDIQAGNYSTSSLDDLSENFAVGKQLLRDYNIEAKHPVVMVPGVISTGIESWGVIGDDECDSSAHFRKRLWGSFYMLRTMVMDKVCWLKHVMLDPETGLDPPNFTLRAAQGFESTDYFIAGYWIWNKVFQNLGVIGYEPNKMTSAAYDWRLAYLDLERRDRYFTKLKEQIELFHQLSGEKVCLIGHSMGSQIIFYFMKWVEAEGPLYGNGGRGWVNEHIDSFINAAGTLLGAPKAVPALISGEMKDTIQLNTLAMYGLEKFFSRIERVKMLQTWGGIPSMLPKGEEVIWGDMKSSSEDALNNNTDTYGNFIRFERNTSDAFNKNLTMKDAINMTLSISPEWLQRRVHEQYSFGYSKNEEELRKNELHHKHWSNPMEVPLPEAPHMKIYCIYGVNNPTERAYVYKEEDDSSALNLTIDYESKQPVFLTEGDGTVPLVAHSMCHKWAQGASPYNPAGINVTIVEMKHQPDRFDIRGGAKSAEHVDILGSAELNDYILKIASGNGDLVEPRQLSNLSQWVSQMPFPM.

Residues 1 to 71 form a disordered region; it reads MGTLFRRNVQ…FDRKRDGNGR (71 aa). The Cytoplasmic portion of the chain corresponds to 1-80; the sequence is MGTLFRRNVQ…RKRWRDSRRL (80 aa). Positions 34-48 are enriched in basic residues; it reads HIHHQQGLGHKRRRG. Short sequence motifs (bipartite nuclear localization signal) lie at residues 43–50 and 64–71; these read HKRRRGIS and RKRDGNGR. Positions 54–70 are enriched in basic and acidic residues; it reads KRNERGKDFDRKRDGNG. Residues 81–101 traverse the membrane as a helical segment; that stretch reads IFILGAFLGVLLPFSFGAYHV. Over 102–661 the chain is Lumenal; sequence HNSDSDLFDN…QWVSQMPFPM (560 aa). Residue glutamine 162 coordinates substrate. The GHSXG lipase motif signature appears at 322-326; it reads GHSMG. The Acyl-ester intermediate role is filled by serine 324. Methionine 325 is a binding site for substrate. Asparagine 453, asparagine 461, and asparagine 469 each carry an N-linked (GlcNAc...) asparagine glycan. The Charge relay system role is filled by aspartate 567. Asparagine 594 carries an N-linked (GlcNAc...) asparagine glycan. Histidine 618 functions as the Charge relay system in the catalytic mechanism.

The protein belongs to the AB hydrolase superfamily. Lipase family.

The protein localises to the endoplasmic reticulum membrane. The protein resides in the nucleus inner membrane. The catalysed reaction is a glycerophospholipid + a 1,2-diacyl-sn-glycerol = a monoacylglycerophospholipid + a triacyl-sn-glycerol. It carries out the reaction a 1-acyl-sn-glycerol + a 1,2-diacyl-sn-glycero-3-phosphocholine = a 1-acyl-sn-glycero-3-phosphocholine + a 1,2-diacyl-sn-glycerol. The enzyme catalyses 1,2-di-(9Z-octadecenoyl)-sn-glycero-3-phosphoethanolamine + 1,2-di-(9Z-octadecenoyl)-sn-glycerol = 1-(9Z-octadecenoyl)-sn-glycero-3-phosphoethanolamine + 1,2,3-tri-(9Z-octadecenoyl)-glycerol. It catalyses the reaction 1,2-di-(9Z-octadecenoyl)-sn-glycerol + 1,2-di-(9Z-octadecenoyl)-sn-glycero-3-phosphocholine = 1,2,3-tri-(9Z-octadecenoyl)-glycerol + 1-(9Z-octadecenoyl)-sn-glycero-3-phosphocholine. The catalysed reaction is 1-(9Z-octadecenoyl)-sn-glycerol + 1,2-di-(9Z-octadecenoyl)-sn-glycero-3-phosphocholine = di-(9Z)-octadecenoylglycerol + 1-(9Z-octadecenoyl)-sn-glycero-3-phosphocholine. It carries out the reaction 2-(9Z-octadecenoyl)-glycerol + 1,2-di-(9Z-octadecenoyl)-sn-glycero-3-phosphocholine = 1,2-di-(9Z-octadecenoyl)-glycerol + 1-(9Z-octadecenoyl)-sn-glycero-3-phosphocholine. The enzyme catalyses 1-(9Z-octadecenoyl)-2-hexadecanoyl-sn-glycero-3-phosphoethanolamine + 1,2-di-(9Z-octadecenoyl)-sn-glycerol = 1,2-di-(9Z)-octadecenoyl-3-hexadecanoyl-sn-glycerol + 1-(9Z-octadecenoyl)-sn-glycero-3-phosphoethanolamine. It catalyses the reaction 1-(9Z-octadecenoyl)-2-octadecanoyl-sn-glycero-3-phosphoethanolamine + 1,2-di-(9Z-octadecenoyl)-sn-glycerol = 1,2-di-(9Z)-octadecenoyl-3-octadecanoyl-sn-glycerol + 1-(9Z-octadecenoyl)-sn-glycero-3-phosphoethanolamine. The catalysed reaction is 1-(9Z)-octadecenoyl-2-(9Z,12Z)-octadecadienoyl-sn-glycero-3-phosphoethanolamine + 1,2-di-(9Z-octadecenoyl)-sn-glycerol = 1,2-di-(9Z)-octadecenoyl-3-(9Z,12Z)-octadecadienoyl-sn-glycerol + 1-(9Z-octadecenoyl)-sn-glycero-3-phosphoethanolamine. Catalyzes triacylglycerol (TAG) formation by an acyl-CoA independent pathway. The enzyme specifically transfers acyl groups from the sn-2 position of a phospholipid to diacylglycerol (DAG), thus forming an sn-1-lysophospholipid. The preferred acyl donors are phosphatidylethanolamine (PE) and phosphatidylcholine (PC). Also capable of using broad acyl donors such as phosphatidic acid (PA), phosphatidylserine (PS), phosphatidylglycerol (PG) and phosphatidylinositol (PI), as well as monogalactosyldiacylglycerol (MGDG), digalactosyldiacylglycerol (DGDG), and acyl-CoA, and it is more likely to use unsaturated acyl donors. As acyl acceptors, it prefers 1,2- over 1,3-diacylglycerol (DAG). Additionally, has esterification activity that can utilize methanol as acyl acceptor to generate fatty acid methyl esters (FAME). Can also utilize ceramide instead of DAG, acylating the ceramides by attaching a fatty acid to the hydroxy group on the first carbon atom of the long-chain base to produce 1-O-acylceramides. Involved in lipid particle synthesis from the endoplasmic reticulum, promoting localized TAG production at discrete ER subdomains. Relocates from the endoplasmic reticulum to a subdomain of the inner nuclear membrane upon nutrient starvation, where it provides a site of TAG synthesis, which is coupled with nuclear membrane remodeling. The sequence is that of Phospholipid:diacylglycerol acyltransferase from Saccharomyces cerevisiae (strain ATCC 204508 / S288c) (Baker's yeast).